Here is a 226-residue protein sequence, read N- to C-terminus: Triosephosphate isomerase (226 aa).

The active-site Electrophile is the H91. Residue E163 is the Proton acceptor of the active site. The substrate site is built by G169 and S207.

Belongs to the triosephosphate isomerase family. As to quaternary structure, homodimer.

The protein localises to the cytoplasm. The catalysed reaction is D-glyceraldehyde 3-phosphate = dihydroxyacetone phosphate. It functions in the pathway carbohydrate biosynthesis; gluconeogenesis. It participates in carbohydrate degradation; glycolysis; D-glyceraldehyde 3-phosphate from glycerone phosphate: step 1/1. Functionally, involved in the gluconeogenesis. Catalyzes stereospecifically the conversion of dihydroxyacetone phosphate (DHAP) to D-glyceraldehyde-3-phosphate (G3P). This Rhizobium etli (strain ATCC 51251 / DSM 11541 / JCM 21823 / NBRC 15573 / CFN 42) protein is Triosephosphate isomerase.